A 663-amino-acid chain; its full sequence is UvrABC system protein B (663 aa).

A compositionally biased stretch (basic and acidic residues) spans 1 to 10; the sequence is MIDKRDDKPF. Residues 1-23 form a disordered region; sequence MIDKRDDKPFKLKSKYKPSGDQP. The Helicase ATP-binding domain maps to 31-418; sequence DNIEGGEKAQ…TNTIIEQIIR (388 aa). Residue 44-51 participates in ATP binding; sequence GATGTGKT. The Beta-hairpin motif lies at 97–120; sequence YYDYYQPEAYVPSSDTYIEKDSSV. In terms of domain architecture, Helicase C-terminal spans 435 to 601; it reads QMDDLLGEIN…TIKKDIRGLI (167 aa). One can recognise a UVR domain in the interval 627–662; that stretch reads KEAINALQKQMQEAAELLDFELAAQMRDLILELKLM.

Belongs to the UvrB family. In terms of assembly, forms a heterotetramer with UvrA during the search for lesions. Interacts with UvrC in an incision complex.

It localises to the cytoplasm. The UvrABC repair system catalyzes the recognition and processing of DNA lesions. A damage recognition complex composed of 2 UvrA and 2 UvrB subunits scans DNA for abnormalities. Upon binding of the UvrA(2)B(2) complex to a putative damaged site, the DNA wraps around one UvrB monomer. DNA wrap is dependent on ATP binding by UvrB and probably causes local melting of the DNA helix, facilitating insertion of UvrB beta-hairpin between the DNA strands. Then UvrB probes one DNA strand for the presence of a lesion. If a lesion is found the UvrA subunits dissociate and the UvrB-DNA preincision complex is formed. This complex is subsequently bound by UvrC and the second UvrB is released. If no lesion is found, the DNA wraps around the other UvrB subunit that will check the other stand for damage. This is UvrABC system protein B from Streptococcus pyogenes serotype M6 (strain ATCC BAA-946 / MGAS10394).